The following is a 261-amino-acid chain: Ribosome-inactivating protein PD-L1/PD-L2 (261 aa).

Residues asparagine 10 and asparagine 43 are each glycosylated (N-linked (GlcNAc...) asparagine; in PD-L1 and PD-L2). Intrachain disulfides connect cysteine 34–cysteine 258 and cysteine 84–cysteine 105. The active site involves tyrosine 72. Valine 73 serves as a coordination point for substrate. Residue serine 120 coordinates substrate. Catalysis depends on residues tyrosine 122, glutamate 175, and arginine 178. Arginine 178 contacts substrate. Residue asparagine 255 is glycosylated (N-linked (GlcNAc...) asparagine; in PD-L1).

This sequence belongs to the ribosome-inactivating protein family. Type 1 RIP subfamily. Post-translationally, N-glycosylated. Loss of glycosylation does not affect DNA-cleaving ability. Loss of glycosylation does not affect protein synthesis inhibition, but increases adenine polynucleotide glycosidase activity likely as a consequence of the increased accessibility of substrates to the active site pocket in the absence of glycosylation. Expressed in leaves (at protein level).

The catalysed reaction is Endohydrolysis of the N-glycosidic bond at one specific adenosine on the 28S rRNA.. Inhibits protein synthesis. Has adenine polynucleotide glycosidase activity on herring sperm (hs)DNA and poly(A) substrates. Cleaves supercoiled pBR322 dsDNA. The protein is Ribosome-inactivating protein PD-L1/PD-L2 of Phytolacca dioica (Bella sombra tree).